Reading from the N-terminus, the 328-residue chain is MAKIYTDREASLEPLKGKTIAVIGYGIQGRAQALNLRDSGLEVIIGLRRGGKSWELATSEGFRVYEIGEAVRKADVILVLIPDMEQPKVWQEQIAPNLKEGVVVDFAHGFNVHFGLIKPPKNIDVIMVAPKAPGKAVREEYLAGRGVPALVAVYQDYSGSALKYALALAKGIGATRAGVIETTFAEETETDLIGEQIVLVGGLMELIKKGFEVLVEMGYQPEVAYFEVLNEAKLIMDLIWQRGIYGMLNGVSDTAKYGGLTVGPRVIDENVKRKMKEAAMRVKSGEFAKEWVEEYNRGAPTLRKLMEEARTHPIEKVGEEMRKLLFGP.

Residues 2–182 form the KARI N-terminal Rossmann domain; it reads AKIYTDREAS…GATRAGVIET (181 aa). NADP(+)-binding positions include 25-28, Arg48, Ser53, and 83-86; these read YGIQ and DMEQ. His108 is a catalytic residue. Gly134 is a binding site for NADP(+). One can recognise a KARI C-terminal knotted domain in the interval 183–328; that stretch reads TFAEETETDL…EEMRKLLFGP (146 aa). Residues Asp191, Glu195, Glu227, and Glu231 each contribute to the Mg(2+) site. Ser252 is a binding site for substrate.

This sequence belongs to the ketol-acid reductoisomerase family. The cofactor is Mg(2+).

The catalysed reaction is (2R)-2,3-dihydroxy-3-methylbutanoate + NADP(+) = (2S)-2-acetolactate + NADPH + H(+). It carries out the reaction (2R,3R)-2,3-dihydroxy-3-methylpentanoate + NADP(+) = (S)-2-ethyl-2-hydroxy-3-oxobutanoate + NADPH + H(+). Its pathway is amino-acid biosynthesis; L-isoleucine biosynthesis; L-isoleucine from 2-oxobutanoate: step 2/4. It participates in amino-acid biosynthesis; L-valine biosynthesis; L-valine from pyruvate: step 2/4. Functionally, involved in the biosynthesis of branched-chain amino acids (BCAA). Catalyzes an alkyl-migration followed by a ketol-acid reduction of (S)-2-acetolactate (S2AL) to yield (R)-2,3-dihydroxy-isovalerate. In the isomerase reaction, S2AL is rearranged via a Mg-dependent methyl migration to produce 3-hydroxy-3-methyl-2-ketobutyrate (HMKB). In the reductase reaction, this 2-ketoacid undergoes a metal-dependent reduction by NADPH to yield (R)-2,3-dihydroxy-isovalerate. This Pyrobaculum aerophilum (strain ATCC 51768 / DSM 7523 / JCM 9630 / CIP 104966 / NBRC 100827 / IM2) protein is Ketol-acid reductoisomerase (NADP(+)).